The chain runs to 422 residues: 5-methylthioadenosine/S-adenosylhomocysteine deaminase 1 (422 aa).

Zn(2+) is bound by residues H56 and H58. E85 and H174 together coordinate substrate. H201 lines the Zn(2+) pocket. E204 and D290 together coordinate substrate. D290 is a Zn(2+) binding site.

Belongs to the metallo-dependent hydrolases superfamily. MTA/SAH deaminase family. Zn(2+) serves as cofactor.

The enzyme catalyses S-adenosyl-L-homocysteine + H2O + H(+) = S-inosyl-L-homocysteine + NH4(+). It catalyses the reaction S-methyl-5'-thioadenosine + H2O + H(+) = S-methyl-5'-thioinosine + NH4(+). Functionally, catalyzes the deamination of 5-methylthioadenosine and S-adenosyl-L-homocysteine into 5-methylthioinosine and S-inosyl-L-homocysteine, respectively. Is also able to deaminate adenosine. The protein is 5-methylthioadenosine/S-adenosylhomocysteine deaminase 1 of Archaeoglobus fulgidus (strain ATCC 49558 / DSM 4304 / JCM 9628 / NBRC 100126 / VC-16).